Here is a 211-residue protein sequence, read N- to C-terminus: Endo-1,4-beta-xylanase 6 (211 aa).

A signal peptide spans methionine 1 to alanine 16. The 192-residue stretch at alanine 19–serine 210 folds into the GH11 domain. Glutamate 106 functions as the Nucleophile in the catalytic mechanism. Residue glutamate 197 is the Proton donor of the active site.

The protein belongs to the glycosyl hydrolase 11 (cellulase G) family.

The protein localises to the secreted. The catalysed reaction is Endohydrolysis of (1-&gt;4)-beta-D-xylosidic linkages in xylans.. The protein operates within glycan degradation; xylan degradation. Its function is as follows. Endo-1,4-beta-xylanase involved in the hydrolysis of xylan, a major structural heterogeneous polysaccharide found in plant biomass representing the second most abundant polysaccharide in the biosphere, after cellulose. The sequence is that of Endo-1,4-beta-xylanase 6 (XYN6) from Aspergillus niger.